Reading from the N-terminus, the 365-residue chain is tRNA (guanine(6)-N2)-methyltransferase (365 aa).

The THUMP domain occupies 69–182; the sequence is NENSRLLHRV…KDVFFLGIDT (114 aa). S-adenosyl-L-methionine-binding positions include 198–202, 228–230, Glu248, 276–277, and Asn293; these read HPAHL, SGT, and DA.

It belongs to the methyltransferase superfamily. Monomer in solution.

Its subcellular location is the cytoplasm. The enzyme catalyses guanosine(6) in tRNA + S-adenosyl-L-methionine = N(2)-methylguanosine(6) in tRNA + S-adenosyl-L-homocysteine + H(+). S-adenosyl-L-methionine-dependent methyltransferase that catalyzes the methylation of the guanosine nucleotide at position 6 (m2G6) in tRNA(Phe). This chain is tRNA (guanine(6)-N2)-methyltransferase, found in Pyrococcus furiosus (strain ATCC 43587 / DSM 3638 / JCM 8422 / Vc1).